A 367-amino-acid polypeptide reads, in one-letter code: Protein SGT1 homolog (367 aa).

3 TPR repeats span residues 6-39 (ASDLESKAKAAFVDDDFELAAELYTQAIEASPAT), 40-73 (AELYADRAQAHIKLGNYTEAVADANKAIELDPSM), and 75-107 (KAYLRKGAACIRLEEYQTAKAALELGYSFASGD). Residues 165–254 (KPKYRHDFYN…AEQITWTSLD (90 aa)) enclose the CS domain. 2 disordered regions span residues 261-289 (AVPQKIIPPAESAQRPSYPSSKSKKDWDK) and 347-367 (VGSKKVEGSPPDGMELKKWEY). In terms of domain architecture, SGS spans 277 to 367 (SYPSSKSKKD…DGMELKKWEY (91 aa)).

It belongs to the SGT1 family. As to quaternary structure, interacts (via CS domain) with RAR1 (via CHORD 2 domain). Interacts with RAD6. Expressed in roots, root tips, shoot apical meristem (SAM), young leaves, flag leaves and ears.

Its subcellular location is the cytoplasm. The protein resides in the nucleus. Functionally, involved in basal disease resistance to bacterial blight (X.oryzae). May act as positive regulator of basal defense. Probably required for SCF-mediated ubiquitination, by coupling HSP90 to SCF complex for ubiquitination of HSP90 client proteins. This chain is Protein SGT1 homolog, found in Oryza sativa subsp. japonica (Rice).